Here is a 366-residue protein sequence, read N- to C-terminus: Probable quinol oxidase subunit 2 (366 aa).

The signal sequence occupies residues 1-19 (MSKFKSLLLLFGTLILLSG). Residue Cys20 is the site of N-palmitoyl cysteine attachment. The S-diacylglycerol cysteine moiety is linked to residue Cys20. The next 2 helical transmembrane spans lie at 38–58 (FLILYSIVFMLVICFVVLGMF) and 80–100 (AIIETIWFVIPIIIVAALAIP). Positions 330–366 (EPYNNEFKKDESKNAKEMKKISKDAQDQDNDDHGGGH) are disordered. The segment covering 335–366 (EFKKDESKNAKEMKKISKDAQDQDNDDHGGGH) has biased composition (basic and acidic residues).

This sequence belongs to the cytochrome c oxidase subunit 2 family.

The protein resides in the cell membrane. It catalyses the reaction 2 a quinol + O2 = 2 a quinone + 2 H2O. Functionally, catalyzes quinol oxidation with the concomitant reduction of oxygen to water. Subunit II transfers the electrons from a quinol to the binuclear center of the catalytic subunit I. This Staphylococcus aureus (strain USA300) protein is Probable quinol oxidase subunit 2 (qoxA).